The chain runs to 269 residues: uncharacterized protein (269 aa).

The segment at M1–C22 is disordered.

This is an uncharacterized protein from Gallus gallus (Chicken).